The sequence spans 856 residues: DNA mismatch repair protein MutS (856 aa).

An ATP-binding site is contributed by 618–625; the sequence is GPNMGGKS.

Belongs to the DNA mismatch repair MutS family.

This protein is involved in the repair of mismatches in DNA. It is possible that it carries out the mismatch recognition step. This protein has a weak ATPase activity. The sequence is that of DNA mismatch repair protein MutS from Shewanella putrefaciens (strain CN-32 / ATCC BAA-453).